The primary structure comprises 474 residues: JmjC domain-containing protein F (474 aa).

Residues 247 to 269 (KTKKQQQQQQTTTTTANNDNDNS) form a disordered region. Over residues 251–261 (QQQQQQTTTTT) the composition is skewed to low complexity. Residues 305–474 (AYLAQHGLIE…LSLSFWFIKK (170 aa)) form the JmjC domain.

This chain is JmjC domain-containing protein F (jcdF), found in Dictyostelium discoideum (Social amoeba).